Consider the following 62-residue polypeptide: Small ribosomal subunit protein bS21 (62 aa).

The tract at residues 38 to 62 is disordered; it reads YEKPSERRKRKMNAAVRKNRRTRHG.

This sequence belongs to the bacterial ribosomal protein bS21 family.

The sequence is that of Small ribosomal subunit protein bS21 from Gemmatimonas aurantiaca (strain DSM 14586 / JCM 11422 / NBRC 100505 / T-27).